The chain runs to 485 residues: Phenylalanine--tRNA ligase alpha subunit, cytoplasmic (485 aa).

L-phenylalanine contacts are provided by residues Thr-318, 360 to 362 (QIE), and Tyr-400. Glu-402 contacts Mg(2+). L-phenylalanine is bound at residue Phe-426.

This sequence belongs to the class-II aminoacyl-tRNA synthetase family. Phe-tRNA synthetase alpha subunit type 2 subfamily. In terms of assembly, tetramer of two alpha and two beta subunits. Mg(2+) serves as cofactor.

Its subcellular location is the cytoplasm. The protein localises to the cytosol. It catalyses the reaction tRNA(Phe) + L-phenylalanine + ATP = L-phenylalanyl-tRNA(Phe) + AMP + diphosphate + H(+). The protein is Phenylalanine--tRNA ligase alpha subunit, cytoplasmic of Arabidopsis thaliana (Mouse-ear cress).